The chain runs to 237 residues: MRPSNRTPAQTRPITITRQFTAHAEGSVLVEFGETKVLCTASFTEGVPRFLKGQGQGWVTAEYGMLPRSTHSRMDREAARGKQSGRTQEIQRLIGRALRACVDMKALGENTIVIDCDVIQADGGTRTASITGACVALVDALNWARGKGIIKSNPLKFLIAAVSVGIYKGEAISDLEYIEDSAAETDMNVVMTETGKIIEIQGTAEGEPFSHEELLELLALAKNSIREIVDVQKAALN.

Phosphate contacts are provided by residues Arg86 and 124–126; that span reads GTR.

The protein belongs to the RNase PH family. Homohexameric ring arranged as a trimer of dimers.

It carries out the reaction tRNA(n+1) + phosphate = tRNA(n) + a ribonucleoside 5'-diphosphate. Functionally, phosphorolytic 3'-5' exoribonuclease that plays an important role in tRNA 3'-end maturation. Removes nucleotide residues following the 3'-CCA terminus of tRNAs; can also add nucleotides to the ends of RNA molecules by using nucleoside diphosphates as substrates, but this may not be physiologically important. Probably plays a role in initiation of 16S rRNA degradation (leading to ribosome degradation) during starvation. In Shewanella baltica (strain OS223), this protein is Ribonuclease PH.